We begin with the raw amino-acid sequence, 293 residues long: Ribosomal protein L11 methyltransferase (293 aa).

S-adenosyl-L-methionine is bound by residues T145, G166, D188, and N230.

Belongs to the methyltransferase superfamily. PrmA family.

Its subcellular location is the cytoplasm. The catalysed reaction is L-lysyl-[protein] + 3 S-adenosyl-L-methionine = N(6),N(6),N(6)-trimethyl-L-lysyl-[protein] + 3 S-adenosyl-L-homocysteine + 3 H(+). Methylates ribosomal protein L11. The protein is Ribosomal protein L11 methyltransferase of Shewanella baltica (strain OS185).